Consider the following 149-residue polypeptide: Large ribosomal subunit protein bL9 (149 aa).

This sequence belongs to the bacterial ribosomal protein bL9 family.

Binds to the 23S rRNA. This is Large ribosomal subunit protein bL9 from Salmonella dublin (strain CT_02021853).